The chain runs to 476 residues: tRNA-2-methylthio-N(6)-dimethylallyladenosine synthase (476 aa).

Over residues M1–R14 the composition is skewed to basic and acidic residues. The segment at M1–D20 is disordered. The region spanning R26–E147 is the MTTase N-terminal domain. [4Fe-4S] cluster is bound by residues C35, C71, C105, C170, C174, and C177. Positions D156–E390 constitute a Radical SAM core domain. The TRAM domain maps to A393–R453.

Belongs to the methylthiotransferase family. MiaB subfamily. Monomer. It depends on [4Fe-4S] cluster as a cofactor.

The protein localises to the cytoplasm. The enzyme catalyses N(6)-dimethylallyladenosine(37) in tRNA + (sulfur carrier)-SH + AH2 + 2 S-adenosyl-L-methionine = 2-methylsulfanyl-N(6)-dimethylallyladenosine(37) in tRNA + (sulfur carrier)-H + 5'-deoxyadenosine + L-methionine + A + S-adenosyl-L-homocysteine + 2 H(+). Catalyzes the methylthiolation of N6-(dimethylallyl)adenosine (i(6)A), leading to the formation of 2-methylthio-N6-(dimethylallyl)adenosine (ms(2)i(6)A) at position 37 in tRNAs that read codons beginning with uridine. This chain is tRNA-2-methylthio-N(6)-dimethylallyladenosine synthase, found in Roseiflexus sp. (strain RS-1).